A 330-amino-acid polypeptide reads, in one-letter code: tRNA pseudouridine synthase B (330 aa).

Asp42 functions as the Nucleophile in the catalytic mechanism.

This sequence belongs to the pseudouridine synthase TruB family. Type 1 subfamily.

The catalysed reaction is uridine(55) in tRNA = pseudouridine(55) in tRNA. Its function is as follows. Responsible for synthesis of pseudouridine from uracil-55 in the psi GC loop of transfer RNAs. The polypeptide is tRNA pseudouridine synthase B (Lactococcus lactis subsp. cremoris (strain MG1363)).